Consider the following 354-residue polypeptide: Gibberellin receptor GID1 (354 aa).

The short motif at 120 to 122 (HGG) is the Involved in the stabilization of the negatively charged intermediate by the formation of the oxyanion hole element. Residues 122–123 (GS), Y134, S198, and D250 contribute to the gibberellin A3 site. Residues 122–123 (GS), Y134, and S198 contribute to the gibberellin A4 site. S198 is a catalytic residue. The active site involves D296. Residue G327 participates in gibberellin A3 binding. Gibberellin A4 is bound at residue G327.

It belongs to the 'GDXG' lipolytic enzyme family. Interacts with the DELLA protein SLR1 in a GA-dependent manner, resulting in subsequent SLR1 degradation.

It is found in the nucleus. In terms of biological role, functions as a soluble gibberellin (GA) receptor. GA is an essential hormone that regulates growth and development in plants. Binds with high affinity the biologically active GAs such as GA1, GA3 and GA4, but has low or no affinity for the biologically inactive GAs. Upon GA-binding, it interacts with the DELLA protein SLR1, a repressor of GA signaling. This leads to SLR1 degradation by the proteasome, allowing the GA signaling pathway. The chain is Gibberellin receptor GID1 from Oryza sativa subsp. japonica (Rice).